Consider the following 462-residue polypeptide: Prenyltransferase phqI (462 aa).

Glu-101 contributes to the brevianamide F binding site. 8 residues coordinate dimethylallyl diphosphate: Arg-117, Lys-204, Tyr-206, Lys-273, Tyr-275, Tyr-357, Tyr-442, and Tyr-446.

Belongs to the tryptophan dimethylallyltransferase family.

It participates in alkaloid biosynthesis. Prenyltransferase; part of the gene cluster that mediates the biosynthesis of paraherquamide, a fungal indole alkaloid that belongs to a family of natural products containing a characteristic bicyclo[2.2.2]diazaoctane core. The first steps in the biosynthesis of paraherquamide is the production of the beta-methyl-proline precursor from L-isoleucine. They require oxidation of a terminally hydroxylated L-isoleucine to the corresponding aldehyde by enzymes which have still to be identified. Spontaneous cyclization and dehydration would yield the 4-methyl pyrolline-5-carboxylic acid, which is then reduced by the pyrroline-5-carboxylate reductase phqD leading to the beta-methyl-proline precursor. The next step of paraherquamide biosynthesis involves coupling of beta-methyl-proline and L-tryptophan by the bimodular NRPS phqB, to produce a monooxopiperazine intermediate. The reductase (R) domain of phqB utilizes NADPH for hydride transfer to reduce the thioester bond of the T domain-tethered linear dipeptide to a hemithioaminal intermediate, which spontaneously cleaves the C-S bond to release the aldehyde product. This compound undergoes spontaneous cyclization and dehydration to give a dienamine which is reverse prenylated at C-2 by the reverse prenyltransferase phqJ. The other prenyltransferase present in the cluster, phqI may be a redundant gene in the pathway. During biosynthetic assembly, the key step to produce the polycyclic core is catalyzed by the bifunctional reductase and intramolecular [4+2] Diels-Alderase, phqE, resulting in formation of the [2.2.2] diazaoctane intermediate preparaherquamide. Following formation of preparaherquamide, an indole 2,3-epoxidation-initiated pinacol-like rearrangement is catalyzed by the phqK FAD-dependent monooxygenase. The prenyltransferase phqA, the cytochrome P450 monooxygenase phqL, and the FAD-linked oxidoreductase phqH (or the cytochrome P450 monooxygenase phqM), are proposed to be involved in the formation of the pyran ring. The FAD-dependent monooxygenase phqK is likely responsible for generation of the spiro-oxindole, and the N-methylation is likely mediated by the phqN methyltransferase leading to the isolable natural product paraherquamide F. However, the order of these biosynthetic steps has still to be determined. In late-stage paraherquamide biosynthesis, the third P450 monooxygenase, phqO, is probably responsible for the C-14 hydroxylation, transforming paraherquamide F to paraherquamide G, and paraherquamide E to the final product paraherquamide A. The expansion from the 6-membered ring pyran (in paraherquamides F and G) to the 7-membered dioxepin ring (in paraherquamides A and E) represents a poorly understood but intriguing process that probably involves the 2-oxoglutarate-dependent dioxygenase phqC. Finally, the remaining members of the paraherquamide cluster, including phqI as well as phqM (or phqH), do not have a clearly prescribed role and appear to be redundant. The polypeptide is Prenyltransferase phqI (Penicillium fellutanum).